The following is a 190-amino-acid chain: Prostaglandin-H2 D-isomerase (190 aa).

The N-terminal stretch at 1 to 22 (MATHHTLWMGLALLGVLGDLQA) is a signal peptide. S29 carries an O-linked (GalNAc...) serine glycan. N-linked (GlcNAc...) (complex) asparagine glycosylation is present at N51. The active-site Nucleophile is C65. N-linked (GlcNAc...) (complex) asparagine glycosylation occurs at N78. A disulfide bond links C89 and C186.

The protein belongs to the calycin superfamily. Lipocalin family. In terms of assembly, monomer. Post-translationally, N- and O-glycosylated. Both N-glycosylation recognition sites are almost quantitatively occupied by N-glycans of the biantennary complex type, with a considerable proportion of structures bearing a bisecting GlcNAc. N-glycan at Asn-78: dHex1Hex5HexNAc4. Agalacto structure as well as sialylated and nonsialylated oligosaccharides bearing alpha2-3- and/or alpha2-6-linked NeuNAc are present. In terms of tissue distribution, abundant in the brain and CNS, where it is expressed in tissues of the blood-brain barrier and secreted into the cerebro-spinal fluid. Abundantly expressed in the heart. In the male reproductive system, it is expressed in the testis, epididymis and prostate, and is secreted into the seminal fluid. Expressed in the eye and secreted into the aqueous humor. Lower levels detected in various tissue fluids such as serum, normal urine, ascitic fluid and tear fluid. Also found in a number of other organs including ovary, fimbriae of the fallopian tubes, kidney, leukocytes.

Its subcellular location is the rough endoplasmic reticulum. It localises to the nucleus membrane. The protein resides in the golgi apparatus. It is found in the cytoplasm. The protein localises to the perinuclear region. Its subcellular location is the secreted. The catalysed reaction is prostaglandin H2 = prostaglandin D2. Catalyzes the conversion of PGH2 to PGD2, a prostaglandin involved in smooth muscle contraction/relaxation and a potent inhibitor of platelet aggregation. Involved in a variety of CNS functions, such as sedation, NREM sleep and PGE2-induced allodynia, and may have an anti-apoptotic role in oligodendrocytes. Binds small non-substrate lipophilic molecules, including biliverdin, bilirubin, retinal, retinoic acid and thyroid hormone, and may act as a scavenger for harmful hydrophobic molecules and as a secretory retinoid and thyroid hormone transporter. Possibly involved in development and maintenance of the blood-brain, blood-retina, blood-aqueous humor and blood-testis barrier. It is likely to play important roles in both maturation and maintenance of the central nervous system and male reproductive system. Involved in PLA2G3-dependent maturation of mast cells. PLA2G3 is secreted by immature mast cells and acts on nearby fibroblasts upstream to PTDGS to synthesize PGD2, which in turn promotes mast cell maturation and degranulation via PTGDR. This is Prostaglandin-H2 D-isomerase (PTGDS) from Homo sapiens (Human).